Reading from the N-terminus, the 240-residue chain is uncharacterized protein (240 aa).

The helical transmembrane segment at 73-93 threads the bilayer; that stretch reads LLGCLYFFIYFVAPTLGPVLF.

This sequence belongs to the universal ribosomal protein uS3 family.

Its subcellular location is the mitochondrion membrane. This is an uncharacterized protein from Arabidopsis thaliana (Mouse-ear cress).